The following is a 562-amino-acid chain: Laccase-2 (562 aa).

The signal sequence occupies residues 1-26 (MASAASSLPLLVSSLLLALFALGAHA). Plastocyanin-like domains lie at 34–150 (DIVM…PAAG) and 160–312 (DEAE…YAGV). Asn39, Asn53, Asn72, and Asn80 each carry an N-linked (GlcNAc...) asparagine glycan. Cu cation is bound by residues His84 and His86. Residue Asn118 is glycosylated (N-linked (GlcNAc...) asparagine). Residues His129 and His131 each coordinate Cu cation. N-linked (GlcNAc...) asparagine glycosylation is found at Asn189, Asn244, Asn300, Asn328, Asn376, Asn386, Asn421, and Asn445. In terms of domain architecture, Plastocyanin-like 3 spans 411–546 (DFPDRPPARF…KMAFLVEDGS (136 aa)). Residues His463, His466, His468, His525, Cys526, His527, and His531 each coordinate Cu cation.

The protein belongs to the multicopper oxidase family. The cofactor is Cu cation.

The protein resides in the secreted. Its subcellular location is the extracellular space. It localises to the apoplast. The catalysed reaction is 4 hydroquinone + O2 = 4 benzosemiquinone + 2 H2O. Its function is as follows. Lignin degradation and detoxification of lignin-derived products. The sequence is that of Laccase-2 (LAC2) from Oryza sativa subsp. japonica (Rice).